The chain runs to 1363 residues: Spike glycoprotein (1363 aa).

The signal sequence occupies residues 1-13 (MFLILLISLPMAF). At 14-1307 (AVIGDLKCTT…GTYEYYVKWP (1294 aa)) the chain is on the extracellular side. The BetaCoV S1-NTD domain maps to 15 to 298 (VIGDLKCTTV…DFMSEIKCKT (284 aa)). Cystine bridges form between Cys21/Cys165, Cys160/Cys193, Cys172/Cys252, Cys286/Cys296, and Cys331/Cys356. 2 N-linked (GlcNAc...) asparagine; by host glycosylation sites follow: Asn59 and Asn133. A glycan (N-linked (GlcNAc...) asparagine; by host) is linked at Asn198. The BetaCoV S1-CTD domain maps to 329–617 (PDCNIEAWLN…DVNSGTTCST (289 aa)). Residue Asn359 is glycosylated (N-linked (GlcNAc...) asparagine; by host). Cystine bridges form between Cys374/Cys427 and Cys386/Cys615. Asn437, Asn649, Asn676, Asn696, Asn714, Asn739, and Asn788 each carry an N-linked (GlcNAc...) asparagine; by host glycan. Fusion peptide regions lie at residues 914 to 935 (SAIE…VEAY) and 933 to 953 (EAYN…VQSY). A glycan (N-linked (GlcNAc...) asparagine; by host) is linked at Asn937. Residues Cys938 and Cys949 are joined by a disulfide bond. A heptad repeat 1 region spans residues 1014–1064 (QKLIANAFNNALDAIQEGFDATNSALVKIQAVVNANAEALNNLLQQLSNRF). A coiled-coil region spans residues 1043 to 1087 (QAVVNANAEALNNLLQQLSNRFGAISSSLQEILSRLDALEAQAQI). Residues Asn1194, Asn1224, Asn1234, Asn1253, Asn1267, and Asn1288 are each glycosylated (N-linked (GlcNAc...) asparagine; by host). Residues 1258–1296 (APDLSLDYINVTFLDLQDEMNRLQEAIKVLNQSYINLKD) are heptad repeat 2. Positions 1269–1297 (TFLDLQDEMNRLQEAIKVLNQSYINLKDI) form a coiled coil. A helical transmembrane segment spans residues 1308–1328 (WYVWLLIGFAGVAMLVLLFFI). Residues 1329 to 1363 (CCCTGCGTSCFKICGGCCDDYTGHQELVIKTSHDD) are Cytoplasmic-facing. The KxHxx signature appears at 1359–1363 (TSHDD).

Belongs to the betacoronaviruses spike protein family. Homotrimer; each monomer consists of a S1 and a S2 subunit. The resulting peplomers protrude from the virus surface as spikes. In terms of processing, specific enzymatic cleavages in vivo yield mature proteins. The precursor is processed into S1 and S2 by host cell furin or another cellular protease to yield the mature S1 and S2 proteins. Additionally, a second cleavage leads to the release of a fusion peptide after viral attachment to host cell receptor. The cytoplasmic Cys-rich domain is palmitoylated. Spike glycoprotein is digested within host endosomes.

The protein resides in the virion membrane. Its subcellular location is the host endoplasmic reticulum-Golgi intermediate compartment membrane. The protein localises to the host cell membrane. Attaches the virion to the cell membrane by interacting with host receptor, initiating the infection. In terms of biological role, mediates fusion of the virion and cellular membranes by acting as a class I viral fusion protein. Under the current model, the protein has at least three conformational states: pre-fusion native state, pre-hairpin intermediate state, and post-fusion hairpin state. During viral and target cell membrane fusion, the coiled coil regions (heptad repeats) assume a trimer-of-hairpins structure, positioning the fusion peptide in close proximity to the C-terminal region of the ectodomain. The formation of this structure appears to drive apposition and subsequent fusion of viral and target cell membranes. Its function is as follows. Acts as a viral fusion peptide which is unmasked following S2 cleavage occurring upon virus endocytosis. This Bovine coronavirus (strain vaccine) (BCoV) protein is Spike glycoprotein.